A 243-amino-acid polypeptide reads, in one-letter code: Probable 2-phosphosulfolactate phosphatase (243 aa).

Belongs to the ComB family. The cofactor is Mg(2+).

It carries out the reaction (2R)-O-phospho-3-sulfolactate + H2O = (2R)-3-sulfolactate + phosphate. The chain is Probable 2-phosphosulfolactate phosphatase from Prochlorococcus marinus (strain MIT 9313).